Reading from the N-terminus, the 91-residue chain is MDLFKAFGGKSNSKDIAKERLQLLLVHDRIDTSPRFLEMIKEDILNVISNYVDIDEKGLRVEITKERKSDDTFISALHANIPIKKMKQVIR.

The protein belongs to the MinE family.

Functionally, prevents the cell division inhibition by proteins MinC and MinD at internal division sites while permitting inhibition at polar sites. This ensures cell division at the proper site by restricting the formation of a division septum at the midpoint of the long axis of the cell. This Caldanaerobacter subterraneus subsp. tengcongensis (strain DSM 15242 / JCM 11007 / NBRC 100824 / MB4) (Thermoanaerobacter tengcongensis) protein is Cell division topological specificity factor.